Here is a 215-residue protein sequence, read N- to C-terminus: UPF0173 metal-dependent hydrolase NEQ378 (215 aa).

The protein belongs to the UPF0173 family.

The chain is UPF0173 metal-dependent hydrolase NEQ378 from Nanoarchaeum equitans (strain Kin4-M).